We begin with the raw amino-acid sequence, 931 residues long: Phosphoenolpyruvate carboxylase (931 aa).

Active-site residues include histidine 138 and lysine 594.

This sequence belongs to the PEPCase type 1 family. It depends on Mg(2+) as a cofactor.

It catalyses the reaction oxaloacetate + phosphate = phosphoenolpyruvate + hydrogencarbonate. Functionally, forms oxaloacetate, a four-carbon dicarboxylic acid source for the tricarboxylic acid cycle. The protein is Phosphoenolpyruvate carboxylase of Streptococcus agalactiae serotype Ia (strain ATCC 27591 / A909 / CDC SS700).